The following is a 128-amino-acid chain: RutC family protein BU371 (128 aa).

Belongs to the RutC family.

The chain is RutC family protein BU371 from Buchnera aphidicola subsp. Acyrthosiphon pisum (strain APS) (Acyrthosiphon pisum symbiotic bacterium).